Consider the following 343-residue polypeptide: Hydroxycarboxylic acid receptor 1 (343 aa).

Residues 1–21 (MDNGSCCLIEGEPISQVMPPL) are Extracellular-facing. The N-linked (GlcNAc...) asparagine glycan is linked to Asn-3. Residues 22–42 (LILVFVLGALGNGIALCGFCF) form a helical membrane-spanning segment. Over 43 to 49 (HMKTWKS) the chain is Cytoplasmic. Residues 50 to 70 (STIYLFNLAVADFLLMICLPL) form a helical membrane-spanning segment. The Extracellular portion of the chain corresponds to 71–90 (RTDYYLRRRHWIFGDIACRL). Cys-88 and Cys-165 are joined by a disulfide. The helical transmembrane segment at 91-111 (VLFKLAMNRAGSIVFLTVVAV) threads the bilayer. Residues 112–131 (DRYFKVVHPHHMVNAISNRT) lie on the Cytoplasmic side of the membrane. Residues 132-152 (AAATACVLWTLVILGTVYLLM) traverse the membrane as a helical segment. Over 153 to 182 (ESHLCVQGTLSSCESFIMESANGWHDVMFQ) the chain is Extracellular. Residues 183 to 203 (LEFFLPLTIILFCSVNVVWSL) form a helical membrane-spanning segment. Residues 204-220 (RRRQQLTRQARMRRATR) lie on the Cytoplasmic side of the membrane. Residues 221–241 (FIMVVASVFITCYLPSVLARL) traverse the membrane as a helical segment. Over 242–259 (YFLWTVPTSACDPSVHTA) the chain is Extracellular. The helical transmembrane segment at 260 to 280 (LHVTLSFTYLNSMLDPLVYYF) threads the bilayer. The Cytoplasmic segment spans residues 281-343 (SSPSLPKFYT…SDGQWDLQVC (63 aa)). Over residues 319-334 (CSKSSIDGANRSQRPS) the composition is skewed to polar residues. The tract at residues 319–343 (CSKSSIDGANRSQRPSDGQWDLQVC) is disordered.

Belongs to the G-protein coupled receptor 1 family. As to expression, highly expressed in subcutaneous fat and omental fat and detectable in lower levels in brain and many other tissues. High levels detected in epididymal and subcutaneous fat with slightly lower in omental fat, low levels are detected in the brain, skeletal muscle, kidney, liver and the pancreas (at protein level).

The protein resides in the cell membrane. Its function is as follows. Acts as a receptor for L-lactate and mediates its anti-lipolytic effect through a G(i)-protein-mediated pathway. This is Hydroxycarboxylic acid receptor 1 (Hcar1) from Mus musculus (Mouse).